We begin with the raw amino-acid sequence, 372 residues long: Delta-type opioid receptor (372 aa).

Residues 1–47 (MELVPSARAELQSSPLVNLSDAFPSAFPSAGANASGSPGARSASSLA) lie on the Extracellular side of the membrane. Asn-18 and Asn-33 each carry an N-linked (GlcNAc...) asparagine glycan. Residues 48 to 75 (LAIAITALYSAVCAVGLLGNVLVMFGIV) traverse the membrane as a helical segment. The Cytoplasmic segment spans residues 76–85 (RYTKLKTATN). Residues 86–110 (IYIFNLALADALATSTLPFQSAKYL) form a helical membrane-spanning segment. At 111-122 (METWPFGELLCK) the chain is on the extracellular side. An intrachain disulfide couples Cys-121 to Cys-198. The chain crosses the membrane as a helical span at residues 123-144 (AVLSIDYYNMFTSIFTLTMMSV). Residues 145-163 (DRYIAVCHPVKALDFRTPA) are Cytoplasmic-facing. A helical transmembrane segment spans residues 164–186 (KAKLINICIWVLASGVGVPIMVM). Topologically, residues 187–206 (AVTQPRDGAVVCMLQFPSPS) are extracellular. A helical transmembrane segment spans residues 207–238 (WYWDTVTKICVFLFAFVVPILIITVCYGLMLL). The Cytoplasmic portion of the chain corresponds to 239 to 261 (RLRSVRLLSGSKEKDRSLRRITR). A helical transmembrane segment spans residues 262–284 (MVLVVVGAFVVCWAPIHIFVIVW). Topologically, residues 285–299 (TLVDINRRDPLVVAA) are extracellular. A helical transmembrane segment spans residues 300–321 (LHLCIALGYANSSLNPVLYAFL). Over 322–372 (DENFKRCFRQLCRTPCGRQEPGSLRRPRQATTRERVTACTPSDGPGGGAAA) the chain is Cytoplasmic. Residue Cys-333 is the site of S-palmitoyl cysteine attachment. Residues 340-372 (QEPGSLRRPRQATTRERVTACTPSDGPGGGAAA) are disordered.

It belongs to the G-protein coupled receptor 1 family. May form homooligomers. Forms a heterodimer with OPRM1. Interacts with GPRASP1. Interacts with RTP4; the interaction promotes cell surface localization of the OPRD1-OPRM1 heterodimer. Ubiquitinated. A basal ubiquitination seems not to be related to degradation. Ubiquitination is increased upon formation of OPRM1:OPRD1 oligomers leading to proteasomal degradation; the ubiquitination is diminished by RTP4. Brain, with high concentrations in the basal ganglia and limbic regions.

The protein resides in the cell membrane. Functionally, G-protein coupled receptor that functions as a receptor for endogenous enkephalins and for a subset of other opioids. Ligand binding causes a conformation change that triggers signaling via guanine nucleotide-binding proteins (G proteins) and modulates the activity of down-stream effectors, such as adenylate cyclase. Signaling leads to the inhibition of adenylate cyclase activity. Inhibits neurotransmitter release by reducing calcium ion currents and increasing potassium ion conductance. Plays a role in the perception of pain and in opiate-mediated analgesia. Plays a role in developing analgesic tolerance to morphine. This is Delta-type opioid receptor (Oprd1) from Mus musculus (Mouse).